The sequence spans 426 residues: O-methyltransferase pyvH (426 aa).

Residues 258–259 (GG), Asp-281, 308–309 (DF), and Arg-323 each bind S-adenosyl-L-methionine. His-327 (proton acceptor) is an active-site residue.

This sequence belongs to the class I-like SAM-binding methyltransferase superfamily. Cation-independent O-methyltransferase family.

The protein operates within secondary metabolite biosynthesis. In terms of biological role, O-methyltransferase; part of the gene cluster that mediates the biosynthesis of pyranoviolin A, a pyranonigrin analog with a C-3 methoxy group. Initially, the PKS portion of pyvA synthesizes C-10 carbon chain from 5 molecules of malonyl-CoA, which is then condensed with the thiolation (T) domain-bound glycine activated by the adenylation (A) domain. The subsequent chain release by Dieckmann condensation (DKC) could be catalyzed by the TE domain present at the C-terminus of pyvA and/or the alpha/beta hydrolase pyvD, installing the tetramic acid moiety. The FAD-dependent monooxygenase pyvC next epoxidizes one of the olefins of the polyketide part, and the epoxide ring-opening induces the dihydro-gamma-pyrone ring formation. The cytochrome P450 monooxygeanse pyvB would be responsible for the 2 consecutive reactions, in which the dihydro-gamma-pyrone is oxidized to gamma-pyrone and C-7 is hydroxylated to yield pyranonigrin F. Finally, the O-methyltransferase pyvH methylates the C-3 hydroxy group to complete the biosynthesis. This Aspergillus violaceofuscus (strain CBS 115571) protein is O-methyltransferase pyvH.